A 437-amino-acid polypeptide reads, in one-letter code: Transcription factor AP-2-alpha (437 aa).

Lysine 10 is covalently cross-linked (Glycyl lysine isopeptide (Lys-Gly) (interchain with G-Cter in SUMO); alternate). Lysine 10 participates in a covalent cross-link: Glycyl lysine isopeptide (Lys-Gly) (interchain with G-Cter in SUMO2); alternate. A disordered region spans residues cysteine 14–leucine 107. The PPxY motif motif lies at tyrosine 57 to tyrosine 62. Low complexity-rich tracts occupy residues isoleucine 65 to serine 74 and glutamine 88 to glutamine 101. Glycyl lysine isopeptide (Lys-Gly) (interchain with G-Cter in SUMO2) cross-links involve residues lysine 177 and lysine 184. Serine 239 is subject to Phosphoserine; by PKA. The segment at arginine 280–aspartate 410 is H-S-H (helix-span-helix), dimerization. Residues leucine 414–lysine 427 show a composition bias toward polar residues. The tract at residues leucine 414–lysine 437 is disordered. Residues serine 428–lysine 437 show a composition bias toward basic and acidic residues.

Belongs to the AP-2 family. As to quaternary structure, binds DNA as a dimer. Can form homodimers or heterodimers with other AP-2 family members. Interacts with WWOX. Interacts with UBE2I. Interacts with RALBP1 in a complex also containing EPN1 and NUMB during interphase and mitosis. Interacts with CITED4. Interacts with KCTD1; this interaction represses transcription activation. Interacts (via C-terminus) with CITED2 (via C-terminus); the interaction stimulates TFAP2A-transcriptional activation. Interacts (via N-terminus) with EP300 (via N-terminus); the interaction requires CITED2. Interacts with KCTD15; this interaction inhibits TFAP2A transcriptional activation. Sumoylated on Lys-10; which inhibits transcriptional activity.

The protein resides in the nucleus. Its function is as follows. Sequence-specific DNA-binding protein that interacts with inducible viral and cellular enhancer elements to regulate transcription of selected genes. AP-2 factors bind to the consensus sequence 5'-GCCNNNGGC-3' and activate genes involved in a large spectrum of important biological functions including proper eye, face, body wall, limb and neural tube development. They also suppress a number of genes including MCAM/MUC18, C/EBP alpha and MYC. AP-2-alpha is the only AP-2 protein required for early morphogenesis of the lens vesicle. Together with the CITED2 coactivator, stimulates the PITX2 P1 promoter transcription activation. Associates with chromatin to the PITX2 P1 promoter region. This Mus musculus (Mouse) protein is Transcription factor AP-2-alpha (Tfap2a).